Consider the following 225-residue polypeptide: GTP:AMP phosphotransferase, mitochondrial (225 aa).

24–29 (GSGKGT) is a GTP binding site. The interval 45 to 74 (SSGDILRQEIKSESTLGREATTYIAQGKLL) is NMP. Residues serine 46, arginine 51, 72–74 (KLL), 103–106 (GFPR), and glutamine 110 contribute to the AMP site. An LID region spans residues 144–181 (NRYVHVPSGRVYNLQYNPPKVPGLDDITGEPLTKRLDD). Residues arginine 145 and 154–155 (VY) each bind GTP. Residues arginine 178 and arginine 189 each coordinate AMP. Serine 218 provides a ligand contact to GTP.

The protein belongs to the adenylate kinase family. AK3 subfamily. Monomer.

It localises to the mitochondrion matrix. It carries out the reaction a ribonucleoside 5'-triphosphate + AMP = a ribonucleoside 5'-diphosphate + ADP. In terms of biological role, involved in maintaining the homeostasis of cellular nucleotides by catalyzing the interconversion of nucleoside phosphates. Has GTP:AMP phosphotransferase and ITP:AMP phosphotransferase activities. Does not accept ATP as phosphate donor. The polypeptide is GTP:AMP phosphotransferase, mitochondrial (Saccharomyces cerevisiae (strain ATCC 204508 / S288c) (Baker's yeast)).